The sequence spans 486 residues: uncharacterized protein (486 aa).

LRR repeat units follow at residues 18-39 (NLKK…KKLV), 43-59 (ELHI…NIPE), 60-81 (NIKS…TKLK), 82-103 (NITY…ILPH), 104-125 (SIEF…NNLV), 126-147 (NLKK…FPIS), 148-168 (IVEL…EKLI), 169-190 (NLKK…IKFP), and 198-219 (DYQS…IEYE).

This is an uncharacterized protein from Amsacta moorei entomopoxvirus (AmEPV).